The following is a 700-amino-acid chain: ATP-dependent zinc metalloprotease FtsH (700 aa).

Over 1–20 (MSSDNGSGRQGGDRGGSTGY) the chain is Cytoplasmic. Residues 21-41 (NLLMYLGFGAIIATLVALYVL) form a helical membrane-spanning segment. Residues 42–171 (QMFQTSLDYT…FRHADPPGPW (130 aa)) are Periplasmic-facing. The helical transmembrane segment at 172–192 (EQHSQLIIGMLLAAMLIYIVV) threads the bilayer. The Cytoplasmic portion of the chain corresponds to 193-700 (RRLSAAGSPM…ITAPATERSG (508 aa)). ATP is bound at residue 262-269 (GPPGTGKT). Zn(2+) is bound at residue H484. Residue E485 is part of the active site. Zn(2+) contacts are provided by H488 and D561.

In the central section; belongs to the AAA ATPase family. The protein in the C-terminal section; belongs to the peptidase M41 family. In terms of assembly, homohexamer. The cofactor is Zn(2+).

The protein localises to the cell inner membrane. Its function is as follows. Acts as a processive, ATP-dependent zinc metallopeptidase for both cytoplasmic and membrane proteins. Plays a role in the quality control of integral membrane proteins. This is ATP-dependent zinc metalloprotease FtsH from Pirellula staleyi (strain ATCC 27377 / DSM 6068 / ICPB 4128) (Pirella staleyi).